A 155-amino-acid polypeptide reads, in one-letter code: 2-C-methyl-D-erythritol 2,4-cyclodiphosphate synthase (155 aa).

Residues D10, H12, and H46 each coordinate a divalent metal cation. 10 to 12 (DSH) lines the 4-CDP-2-C-methyl-D-erythritol 2-phosphate pocket. 4-CDP-2-C-methyl-D-erythritol 2-phosphate contacts are provided by residues 60–62 (DIG), 65–69 (FDEND), and K140.

This sequence belongs to the IspF family. As to quaternary structure, homotrimer. It depends on a divalent metal cation as a cofactor.

It catalyses the reaction 4-CDP-2-C-methyl-D-erythritol 2-phosphate = 2-C-methyl-D-erythritol 2,4-cyclic diphosphate + CMP. It functions in the pathway isoprenoid biosynthesis; isopentenyl diphosphate biosynthesis via DXP pathway; isopentenyl diphosphate from 1-deoxy-D-xylulose 5-phosphate: step 4/6. Its function is as follows. Involved in the biosynthesis of isopentenyl diphosphate (IPP) and dimethylallyl diphosphate (DMAPP), two major building blocks of isoprenoid compounds. Catalyzes the conversion of 4-diphosphocytidyl-2-C-methyl-D-erythritol 2-phosphate (CDP-ME2P) to 2-C-methyl-D-erythritol 2,4-cyclodiphosphate (ME-CPP) with a corresponding release of cytidine 5-monophosphate (CMP). The polypeptide is 2-C-methyl-D-erythritol 2,4-cyclodiphosphate synthase (Mycoplasmoides gallisepticum (strain R(low / passage 15 / clone 2)) (Mycoplasma gallisepticum)).